Reading from the N-terminus, the 823-residue chain is Mitochondrial intermediate peptidase 2 (823 aa).

The transit peptide at 1–33 (MRRLQQSLRRRSARRCPFILIPHRLLTTSYASY) directs the protein to the mitochondrion. Residues 532–553 (IDGDGLPEDWDKPYGPGLEADK) form a disordered region. H595 lines the Zn(2+) pocket. Residue E596 is part of the active site. 2 residues coordinate Zn(2+): H599 and H602.

This sequence belongs to the peptidase M3 family. Zn(2+) serves as cofactor.

The protein resides in the mitochondrion matrix. The catalysed reaction is Release of an N-terminal octapeptide as second stage of processing of some proteins imported into the mitochondrion.. Its function is as follows. Cleaves proteins, imported into the mitochondrion, to their mature size. While most mitochondrial precursor proteins are processed to the mature form in one step by mitochondrial processing peptidase (MPP), the sequential cleavage by MIP of an octapeptide after initial processing by MPP is a required step for a subgroup of nuclear-encoded precursor proteins destined for the matrix or the inner membrane. The protein is Mitochondrial intermediate peptidase 2 (OCT2) of Cryptococcus neoformans var. neoformans serotype D (strain B-3501A) (Filobasidiella neoformans).